A 441-amino-acid polypeptide reads, in one-letter code: Transducin-like enhancer protein 7 (441 aa).

Disordered stretches follow at residues 1 to 77 and 91 to 119; these read MSGE…QWHL and PDAQ…SSSS. A compositionally biased stretch (low complexity) spans 27–49; that stretch reads ESSGVSSQPEPQVQQQLGSLLGV. A compositionally biased stretch (polar residues) spans 62–76; that stretch reads PADQETSTVTQQQWH. The span at 108–119 shows a compositional bias: low complexity; the sequence is GSEVGQPYSSSS. WD repeat units follow at residues 156–194, 204–243, 247–285, 286–325, and 409–441; these read FHGK…AGEK, HPQD…QVRA, STGP…LIRK, HEVP…RLHQ, and EESS…QLLY.

This sequence belongs to the WD repeat Groucho/TLE family.

The chain is Transducin-like enhancer protein 7 from Homo sapiens (Human).